A 933-amino-acid chain; its full sequence is Protein translocase subunit SecA (933 aa).

Residues Q87, 105-109 (GEGKT), and D515 contribute to the ATP site. The Zn(2+) site is built by C917, C919, C928, and H929.

The protein belongs to the SecA family. As to quaternary structure, monomer and homodimer. Part of the essential Sec protein translocation apparatus which comprises SecA, SecYEG and auxiliary proteins SecDF-YajC and YidC. The cofactor is Zn(2+).

It localises to the cell inner membrane. It is found in the cytoplasm. The catalysed reaction is ATP + H2O + cellular proteinSide 1 = ADP + phosphate + cellular proteinSide 2.. Functionally, part of the Sec protein translocase complex. Interacts with the SecYEG preprotein conducting channel. Has a central role in coupling the hydrolysis of ATP to the transfer of proteins into and across the cell membrane, serving both as a receptor for the preprotein-SecB complex and as an ATP-driven molecular motor driving the stepwise translocation of polypeptide chains across the membrane. The sequence is that of Protein translocase subunit SecA from Burkholderia cenocepacia (strain ATCC BAA-245 / DSM 16553 / LMG 16656 / NCTC 13227 / J2315 / CF5610) (Burkholderia cepacia (strain J2315)).